Reading from the N-terminus, the 146-residue chain is Anti-sigma F factor (146 aa).

This sequence belongs to the anti-sigma-factor family.

The enzyme catalyses L-seryl-[protein] + ATP = O-phospho-L-seryl-[protein] + ADP + H(+). It carries out the reaction L-threonyl-[protein] + ATP = O-phospho-L-threonyl-[protein] + ADP + H(+). Binds to sigma F and blocks its ability to form an RNA polymerase holoenzyme (E-sigma F). Phosphorylates SpoIIAA on a serine residue. This phosphorylation may enable SpoIIAA to act as an anti-anti-sigma factor that counteracts SpoIIAB and thus releases sigma F from inhibition. This Bacillus cytotoxicus (strain DSM 22905 / CIP 110041 / 391-98 / NVH 391-98) protein is Anti-sigma F factor.